Here is a 137-residue protein sequence, read N- to C-terminus: Large ribosomal subunit protein uL16 (137 aa).

The protein belongs to the universal ribosomal protein uL16 family. Part of the 50S ribosomal subunit.

In terms of biological role, binds 23S rRNA and is also seen to make contacts with the A and possibly P site tRNAs. This Chelativorans sp. (strain BNC1) protein is Large ribosomal subunit protein uL16.